A 215-amino-acid polypeptide reads, in one-letter code: Adenylate kinase (215 aa).

ATP is bound at residue 10 to 15 (GAGKGT). Residues 30–59 (STGDMLRAAIKAQTPMGKMAKEFMDAGKLV) are NMP. AMP-binding positions include threonine 31, arginine 36, 57–59 (KLV), 85–88 (GFPR), and glutamine 92. The LID stretch occupies residues 122–159 (GRRVHPASGRTYHITYNPPKVDDKDNETGDDLIQREDD). Residues arginine 123 and 132–133 (TY) contribute to the ATP site. Residues arginine 156 and arginine 167 each coordinate AMP. Glutamine 201 is an ATP binding site.

This sequence belongs to the adenylate kinase family. Monomer.

Its subcellular location is the cytoplasm. It carries out the reaction AMP + ATP = 2 ADP. It participates in purine metabolism; AMP biosynthesis via salvage pathway; AMP from ADP: step 1/1. In terms of biological role, catalyzes the reversible transfer of the terminal phosphate group between ATP and AMP. Plays an important role in cellular energy homeostasis and in adenine nucleotide metabolism. The polypeptide is Adenylate kinase (Hydrogenovibrio crunogenus (strain DSM 25203 / XCL-2) (Thiomicrospira crunogena)).